We begin with the raw amino-acid sequence, 489 residues long: Cytochrome P450 302a1, mitochondrial (489 aa).

Cys434 provides a ligand contact to heme.

It belongs to the cytochrome P450 family. The cofactor is heme. Complex coexpression pattern of dib (disembodied) and sad (shade) in the early embryo that restricts to the prothoracic gland cells of the developing ring gland during late embryogenesis. In larvae and adult, coexpression is seen in prothoracic gland and follicle cells of the ovary. In adults, coexpression is seen in the follicle cells.

It is found in the mitochondrion membrane. The catalysed reaction is 2,22-dideoxyecdysone + 2 reduced [adrenodoxin] + O2 + 2 H(+) = 2-deoxyecdysone + 2 oxidized [adrenodoxin] + H2O. Its pathway is steroid biosynthesis; ecdysteroid biosynthesis. In terms of biological role, required for CNS development; negatively regulates glial cell division in the embryonic midline. Involved in the metabolism of insect hormones; responsible for ecdysteroid C22-hydroxylase activity. May be involved in the breakdown of synthetic insecticides. The chain is Cytochrome P450 302a1, mitochondrial from Drosophila melanogaster (Fruit fly).